A 642-amino-acid polypeptide reads, in one-letter code: Protein INCREASED PETAL GROWTH ANISOTROPY 1 (642 aa).

The segment at 1–60 is disordered; it reads MVAGKVRVTMGFHKSPSTKKTKDMPSPLPLPPPPPPPLKPPSSGSATTKPPINPSKPGFT. The segment covering 26-40 has biased composition (pro residues); it reads SPLPLPPPPPPPLKP. Residues 80 to 183 are a coiled coil; sequence AASHNGVVSE…EAEIVELRKL (104 aa). Positions 223-351 are disordered; sequence NLPEPITNQE…PPKSLSIASA (129 aa). Over residues 247–256 the composition is skewed to basic and acidic residues; it reads DIYRKDEIES. The segment covering 258 to 277 has biased composition (low complexity); the sequence is SRSSNSEELTESSSLSTVRS. Over residues 302–344 the composition is skewed to pro residues; the sequence is DPPPQKSIPPPPPPPPPPLLQQPPPPPSVSKAPPPPPPPPPPK.

The protein belongs to the IPGA1 family. In terms of assembly, associates to cortical microtubules via its N-terminal region. Interacts with ANGUSTIFOLIA (AN) on microtubule upon mechanical stress to regulate microtubule organization. Binds to the microtubule-severing enzyme KATANIN (KTN1). Expressed ubiquitously at all development stages, with highest in developing petals. During mechanical stress, accumulates in granules on microtubules.

Its subcellular location is the cytoplasm. It is found in the cytoskeleton. It localises to the cytosol. The protein localises to the cell membrane. Functionally, microtubule-associated protein involved in the regulation of anisotropic petal and cotyledons growth and shape by affecting cortical microtubule organization. Prevents cortical microtubules organization into parallel arrays oriented perpendicular to the axis of cell elongation thus limiting anisotropic cell growth in the late phases of petal development. Cooperatively with ANGUSTIFOLIA (AN), negatively regulates cortical microtubules (CMTs) organization in response to mechanical stress and modulates pavement cells morphogenesis leading to puzzle shape, probably in an AAA1/KTN1-dependent manner. This chain is Protein INCREASED PETAL GROWTH ANISOTROPY 1, found in Arabidopsis thaliana (Mouse-ear cress).